The sequence spans 154 residues: Large ribosomal subunit protein uL16 (154 aa).

The protein belongs to the universal ribosomal protein uL16 family. As to quaternary structure, part of the 50S ribosomal subunit.

Functionally, binds 23S rRNA and is also seen to make contacts with the A and possibly P site tRNAs. This is Large ribosomal subunit protein uL16 from Synechococcus sp. (strain RCC307).